The following is a 184-amino-acid chain: Nucleoside triphosphate pyrophosphatase (184 aa).

The Proton acceptor role is filled by D71.

It belongs to the Maf family. Requires a divalent metal cation as cofactor.

The protein localises to the cytoplasm. The catalysed reaction is a ribonucleoside 5'-triphosphate + H2O = a ribonucleoside 5'-phosphate + diphosphate + H(+). It carries out the reaction a 2'-deoxyribonucleoside 5'-triphosphate + H2O = a 2'-deoxyribonucleoside 5'-phosphate + diphosphate + H(+). Functionally, nucleoside triphosphate pyrophosphatase. May have a dual role in cell division arrest and in preventing the incorporation of modified nucleotides into cellular nucleic acids. The polypeptide is Nucleoside triphosphate pyrophosphatase (Synechococcus sp. (strain CC9605)).